A 131-amino-acid chain; its full sequence is Small ribosomal subunit protein bS6m (131 aa).

The protein belongs to the bacterial ribosomal protein bS6 family. Component of the mitochondrial small ribosomal subunit (mt-SSU). Mature yeast 74S mitochondrial ribosomes consist of a small (37S) and a large (54S) subunit. The 37S small subunit contains a 15S ribosomal RNA (15S mt-rRNA) and 34 different proteins. The 54S large subunit contains a 21S rRNA (21S mt-rRNA) and 46 different proteins.

The protein localises to the mitochondrion. Its function is as follows. Component of the mitochondrial ribosome (mitoribosome), a dedicated translation machinery responsible for the synthesis of mitochondrial genome-encoded proteins, including at least some of the essential transmembrane subunits of the mitochondrial respiratory chain. The mitoribosomes are attached to the mitochondrial inner membrane and translation products are cotranslationally integrated into the membrane. This chain is Small ribosomal subunit protein bS6m (MRP17), found in Saccharomyces cerevisiae (strain ATCC 204508 / S288c) (Baker's yeast).